Reading from the N-terminus, the 96-residue chain is MIMILYWSLPMILFILGLFCFVSNRKHLLSMLLSLEFIVLMLFFMLFIYLNMLNYESYFSMMFLTFSVCEGALGLSILVSMIRTHGNDYFQSFSIM.

Transmembrane regions (helical) follow at residues 2–22 (IMIL…FCFV), 28–48 (LLSM…MLFI), and 62–82 (MFLT…VSMI).

It belongs to the complex I subunit 4L family.

The protein localises to the mitochondrion membrane. The catalysed reaction is a ubiquinone + NADH + 5 H(+)(in) = a ubiquinol + NAD(+) + 4 H(+)(out). In terms of biological role, core subunit of the mitochondrial membrane respiratory chain NADH dehydrogenase (Complex I) that is believed to belong to the minimal assembly required for catalysis. Complex I functions in the transfer of electrons from NADH to the respiratory chain. The immediate electron acceptor for the enzyme is believed to be ubiquinone. The protein is NADH-ubiquinone oxidoreductase chain 4L (mt:ND4L) of Drosophila melanogaster (Fruit fly).